A 72-amino-acid chain; its full sequence is UPF0352 protein SO_2176 (72 aa).

It belongs to the UPF0352 family.

The chain is UPF0352 protein SO_2176 from Shewanella oneidensis (strain ATCC 700550 / JCM 31522 / CIP 106686 / LMG 19005 / NCIMB 14063 / MR-1).